The sequence spans 165 residues: Methylated-DNA--protein-cysteine methyltransferase, constitutive (165 aa).

Residue Cys130 is the Nucleophile; methyl group acceptor of the active site.

The protein belongs to the MGMT family.

The protein resides in the cytoplasm. The enzyme catalyses a 6-O-methyl-2'-deoxyguanosine in DNA + L-cysteinyl-[protein] = S-methyl-L-cysteinyl-[protein] + a 2'-deoxyguanosine in DNA. It carries out the reaction a 4-O-methyl-thymidine in DNA + L-cysteinyl-[protein] = a thymidine in DNA + S-methyl-L-cysteinyl-[protein]. Functionally, involved in the cellular defense against the biological effects of O6-methylguanine (O6-MeG) and O4-methylthymine (O4-MeT) in DNA. Repairs the methylated nucleobase in DNA by stoichiometrically transferring the methyl group to a cysteine residue in the enzyme. This is a suicide reaction: the enzyme is irreversibly inactivated. In Bacillus subtilis (strain 168), this protein is Methylated-DNA--protein-cysteine methyltransferase, constitutive.